The primary structure comprises 363 residues: Phospho-N-acetylmuramoyl-pentapeptide-transferase (363 aa).

10 helical membrane passes run 15-33, 82-102, 106-126, 147-167, 183-203, 207-227, 233-253, 260-280, 285-305, and 341-361; these read FTTL…SFIF, NTPT…LLIV, FYSM…IIGF, FILQ…NGYI, IVIF…VNLT, DGLA…EIFI, LIIY…FLKF, IFMG…ISIL, FTLF…IIQV, and IVEN…VLKI.

This sequence belongs to the glycosyltransferase 4 family. MraY subfamily. It depends on Mg(2+) as a cofactor.

It localises to the cell inner membrane. The catalysed reaction is UDP-N-acetyl-alpha-D-muramoyl-L-alanyl-gamma-D-glutamyl-meso-2,6-diaminopimeloyl-D-alanyl-D-alanine + di-trans,octa-cis-undecaprenyl phosphate = di-trans,octa-cis-undecaprenyl diphospho-N-acetyl-alpha-D-muramoyl-L-alanyl-D-glutamyl-meso-2,6-diaminopimeloyl-D-alanyl-D-alanine + UMP. The protein operates within cell wall biogenesis; peptidoglycan biosynthesis. Its function is as follows. Catalyzes the initial step of the lipid cycle reactions in the biosynthesis of the cell wall peptidoglycan: transfers peptidoglycan precursor phospho-MurNAc-pentapeptide from UDP-MurNAc-pentapeptide onto the lipid carrier undecaprenyl phosphate, yielding undecaprenyl-pyrophosphoryl-MurNAc-pentapeptide, known as lipid I. The sequence is that of Phospho-N-acetylmuramoyl-pentapeptide-transferase from Prochlorococcus marinus (strain MIT 9515).